The chain runs to 471 residues: MPAPQRKHRRGGFSHRCFPTPQTAMTPQPAGPPDGGWGWVVAAAAFAINGLSYGLLRSLGLAFPDLAEHFDRSAQDTAWISALALAVQQAASPVGSALSTRWGARPVVMVGGVLASLGFVFSAFASDLLHLYLGLGLLAGFGWALVFAPALGTLSRYFSRRRVLAVGLALTGNGASSLLLAPALQLLLDTFGWRGALLLLGAITLHLTPCGALLLPLVLPGDPPAPPRSPLAALGLSLFTRRAFSIFALGTALVGGGYFVPYVHLAPHALDRGLGGYGAALVVAVAAMGDAGARLVCGWLADQGWVPLPRLLAVFGALTGLGLWVVGLVPVVGGEESWGGPLLAAAVAYGLSAGSYAPLVFGVLPGLVGVGGVVQATGLVMMLMSLGGLLGPPLSGFLRDETGDFTASFLLSGSLILSGSFIYIGLPRALPSCGPASPPATPPPETGELLPAPQAVLLSPGGPGSTLDTTC.

The span at 1 to 13 (MPAPQRKHRRGGF) shows a compositional bias: basic residues. A disordered region spans residues 1–31 (MPAPQRKHRRGGFSHRCFPTPQTAMTPQPAG). Residues 1 to 35 (MPAPQRKHRRGGFSHRCFPTPQTAMTPQPAGPPDG) lie on the Cytoplasmic side of the membrane. A compositionally biased stretch (low complexity) spans 19 to 28 (PTPQTAMTPQ). 12 helical membrane passes run 36-56 (GWGW…YGLL), 78-98 (AWIS…GSAL), 106-126 (PVVM…AFAS), 131-151 (LYLG…APAL), 163-183 (VLAV…LAPA), 198-218 (LLLG…LPLV), 243-263 (AFSI…VPYV), 273-293 (GLGG…DAGA), 312-332 (LAVF…VPVV), 333-353 (GGEE…GLSA), 367-389 (LVGV…LGGL), and 407-427 (ASFL…IGLP). Residues 428-471 (RALPSCGPASPPATPPPETGELLPAPQAVLLSPGGPGSTLDTTC) are Cytoplasmic-facing.

Belongs to the major facilitator superfamily. Monocarboxylate porter (TC 2.A.1.13) family. In terms of assembly, interacts with isoform 2 of BSG. Expressed in liver, salivary gland and thyroid.

It is found in the endoplasmic reticulum membrane. The protein resides in the cell membrane. The enzyme catalyses pyruvate(out) + H(+)(out) = pyruvate(in) + H(+)(in). Its function is as follows. Proton-linked monocarboxylate transporter. It catalyzes the transport of pyruvate across the plasma membrane. Probably involved in hepatic lipid metabolism: overexpression results in an increase of triacylglycerol(TAG) levels, small increases in intracellular diacylglycerols and decreases in lysophosphatidylcholine, cholesterol ester and sphingomyelin lipids. The chain is Monocarboxylate transporter 11 (SLC16A11) from Homo sapiens (Human).